The primary structure comprises 746 residues: EF-hand domain-containing family member C2 (746 aa).

3 consecutive DM10 domains span residues 75–182 (DKQV…RKMG), 226–367 (DGHV…RTKY), and 429–536 (ESNT…EKHA). Residues 557 to 592 (PRSREIRQVFAAADPQHTKVIEYDPFRNLIVSITDG) form the EF-hand domain.

It is found in the cytoplasm. Its subcellular location is the cytoskeleton. It localises to the cilium axoneme. In terms of biological role, microtubule inner protein (MIP) part of the dynein-decorated doublet microtubules (DMTs) in cilia axoneme, which is required for motile cilia beating. This Gallus gallus (Chicken) protein is EF-hand domain-containing family member C2 (EFHC2).